The following is a 1145-amino-acid chain: Probable ATP-dependent RNA helicase DHX34 (1145 aa).

Positions 1–14 are enriched in basic and acidic residues; the sequence is MPPPRTREGRGHRD. A disordered region spans residues 1–27; it reads MPPPRTREGRGHRDRDHHRAPREEEAP. The Helicase ATP-binding domain occupies 174-334; it reads LQTLKEHQVV…FSHAPVVQVP (161 aa). 187 to 194 is an ATP binding site; sequence GDTGCGKS. The DEAH box motif lies at 281 to 284; sequence DEVH. The Helicase C-terminal domain maps to 370 to 538; that stretch reads AIDNKYPPEE…ALVLQMKSMS (169 aa). Disordered stretches follow at residues 726–764 and 1091–1114; these read LKRQ…QRAD and NTCP…PQKT. Residues Ser-749 and Ser-750 each carry the phosphoserine modification.

Belongs to the DEAD box helicase family. DEAH subfamily. Forms a complex with RUVBL1 and RUVBL2. Part of a complex composed of SMG1, DHX34 and UPF1; within the complex DHX34 acts as a scaffolding protein to facilitate SMG1 phosphorylation of UPF1. Interacts with UPF1, MOV10, EIF4A3, XRN2, SMG6, SMG7, SMG9, UPF3A, UPF3B, CASC3/MLN51, XRN1, DIS3 and DCP1A; the interactions are RNA-independent. Interacts with NCBP1/CPB80; the interaction is RNA-dependent. Interacts (via C-terminus) with SMG1; the interaction is RNA-independent.

It catalyses the reaction ATP + H2O = ADP + phosphate + H(+). Probable ATP-binding RNA helicase. Required for nonsense-mediated decay (NMD) degradation of mRNA transcripts containing premature stop codons. Promotes the phosphorylation of UPF1 along with its interaction with key NMD pathway proteins UPF2 and EIF4A3. Negatively regulates the nucleotide binding ability and ATP hydrolysis of the RUVBL1-RUVBL2 complex via induction of N-terminus conformation changes of the RUVBL2 subunits. The polypeptide is Probable ATP-dependent RNA helicase DHX34 (Mus musculus (Mouse)).